Reading from the N-terminus, the 77-residue chain is Secapin (77 aa).

Positions 1 to 32 (MKNYSKNATHLITVLLFSFVVILLIIPSKCEA) are cleaved as a signal peptide. The propeptide occupies 33–52 (VSNDMQPLEARSADLIPEPR). C61 and C72 are joined by a disulfide.

It belongs to the secapin family. In terms of tissue distribution, expressed by the venom gland.

Its subcellular location is the secreted. Functionally, nontoxic peptide. This Vespa velutina nigrithorax (Hornet) protein is Secapin.